The primary structure comprises 511 residues: Cytochrome P450 89A9 (511 aa).

Residues 6–26 form a helical; Signal-anchor for type II membrane protein membrane-spanning segment; that stretch reads IIFLIISSLTFSIFLKLIFFF. Residue Cys454 participates in heme binding.

It belongs to the cytochrome P450 family. Heme serves as cofactor.

The protein localises to the endoplasmic reticulum membrane. It catalyses the reaction primary fluorescent chlorophyll catabolite + reduced [NADPH--hemoprotein reductase] + O2 = primary fluorescent dioxobilin-type chlorophyll catabolite + formate + oxidized [NADPH--hemoprotein reductase] + 2 H(+). It participates in porphyrin-containing compound metabolism; chlorophyll degradation. Its function is as follows. Involved in the chlorophyll breakdown by its action in nonpolar primary fluorescent chlorophyll catabolite (pFCC) decarbonylation. Involved in the formation of major chlorophyll breakdown products, including non-fluorescent dioxobilin-type chlorophyll catabolites (NDCCs), during leaf senescence. The chain is Cytochrome P450 89A9 from Arabidopsis thaliana (Mouse-ear cress).